A 49-amino-acid polypeptide reads, in one-letter code: uncharacterized protein (49 aa).

A helical membrane pass occupies residues 17-39 (LLVFDTSLYIPPFMLSFIGYSLS).

Its subcellular location is the membrane. This is an uncharacterized protein from Saccharomyces cerevisiae (strain ATCC 204508 / S288c) (Baker's yeast).